A 262-amino-acid polypeptide reads, in one-letter code: 5'-nucleotidase SurE (262 aa).

Positions 8, 9, 40, and 92 each coordinate a divalent metal cation.

The protein belongs to the SurE nucleotidase family. It depends on a divalent metal cation as a cofactor.

It localises to the cytoplasm. It catalyses the reaction a ribonucleoside 5'-phosphate + H2O = a ribonucleoside + phosphate. Nucleotidase that shows phosphatase activity on nucleoside 5'-monophosphates. The sequence is that of 5'-nucleotidase SurE from Xylella fastidiosa (strain M23).